A 104-amino-acid polypeptide reads, in one-letter code: UPF0213 protein PA3854 (104 aa).

One can recognise a GIY-YIG domain in the interval 13-88 (KCWSVYLVRA…KALSKRAKER (76 aa)).

This sequence belongs to the UPF0213 family.

This is UPF0213 protein PA3854 from Pseudomonas aeruginosa (strain ATCC 15692 / DSM 22644 / CIP 104116 / JCM 14847 / LMG 12228 / 1C / PRS 101 / PAO1).